Consider the following 98-residue polypeptide: Phosphoribosyl-ATP pyrophosphatase (98 aa).

It belongs to the PRA-PH family.

The protein resides in the cytoplasm. The catalysed reaction is 1-(5-phospho-beta-D-ribosyl)-ATP + H2O = 1-(5-phospho-beta-D-ribosyl)-5'-AMP + diphosphate + H(+). It participates in amino-acid biosynthesis; L-histidine biosynthesis; L-histidine from 5-phospho-alpha-D-ribose 1-diphosphate: step 2/9. The sequence is that of Phosphoribosyl-ATP pyrophosphatase from Pelotomaculum thermopropionicum (strain DSM 13744 / JCM 10971 / SI).